A 422-amino-acid polypeptide reads, in one-letter code: 26S proteasome non-ATPase regulatory subunit 11 (422 aa).

The PCI domain occupies 224–392; that stretch reads DWKTAYSYFY…GVLIIFDEPP (169 aa).

The protein belongs to the proteasome subunit S9 family. Component of the 19S proteasome regulatory particle complex. The 26S proteasome consists of a 20S core particle (CP) and two 19S regulatory subunits (RP). The regulatory particle is made of a lid composed of 9 subunits including PSMD11, a base containing 6 ATPases and few additional components.

Its subcellular location is the nucleus. It localises to the cytoplasm. The protein localises to the cytosol. Functionally, component of the 26S proteasome, a multiprotein complex involved in the ATP-dependent degradation of ubiquitinated proteins. This complex plays a key role in the maintenance of protein homeostasis by removing misfolded or damaged proteins, which could impair cellular functions, and by removing proteins whose functions are no longer required. Therefore, the proteasome participates in numerous cellular processes, including cell cycle progression, apoptosis, or DNA damage repair. In the complex, PSMD11 is required for proteasome assembly. Plays a key role in increased proteasome activity in embryonic stem cells (ESCs): its high expression in ESCs promotes enhanced assembly of the 26S proteasome, followed by higher proteasome activity. The polypeptide is 26S proteasome non-ATPase regulatory subunit 11 (psmd11) (Xenopus tropicalis (Western clawed frog)).